Here is a 33-residue protein sequence, read N- to C-terminus: U13-ctenitoxin-Pn1c (33 aa).

Intrachain disulfides connect cysteine 3/cysteine 17, cysteine 10/cysteine 21, and cysteine 16/cysteine 30.

As to expression, expressed by the venom gland.

It localises to the secreted. Its function is as follows. Acts as a neurotoxin. This chain is U13-ctenitoxin-Pn1c, found in Phoneutria nigriventer (Brazilian armed spider).